Here is a 25-residue protein sequence, read N- to C-terminus: Small ribosomal subunit protein eS32 eS32z/eS32y/eS32x/eS32w/eS32v (25 aa).

The tract at residues 1–25 (MRAKWKKKRMRRLKRKRRKMRQRSK) is disordered.

The protein belongs to the eukaryotic ribosomal protein eS32 family. In terms of assembly, component of the small ribosomal subunit (SSU).

This chain is Small ribosomal subunit protein eS32 eS32z/eS32y/eS32x/eS32w/eS32v (RPL41A), found in Arabidopsis thaliana (Mouse-ear cress).